Here is an 88-residue protein sequence, read N- to C-terminus: Small ribosomal subunit protein bS20 (88 aa).

This sequence belongs to the bacterial ribosomal protein bS20 family.

Binds directly to 16S ribosomal RNA. In Desulforudis audaxviator (strain MP104C), this protein is Small ribosomal subunit protein bS20.